A 228-amino-acid chain; its full sequence is Small ribosomal subunit protein uS2 (228 aa).

It belongs to the universal ribosomal protein uS2 family.

This Blochmanniella pennsylvanica (strain BPEN) protein is Small ribosomal subunit protein uS2.